A 372-amino-acid polypeptide reads, in one-letter code: Flagellar P-ring protein (372 aa).

Positions 1–25 are cleaved as a signal peptide; sequence MSKKILFLIKVIVFIFTTFSLPLYA.

The protein belongs to the FlgI family. As to quaternary structure, the basal body constitutes a major portion of the flagellar organelle and consists of four rings (L,P,S, and M) mounted on a central rod.

It is found in the bacterial flagellum basal body. Its function is as follows. Assembles around the rod to form the L-ring and probably protects the motor/basal body from shearing forces during rotation. This Buchnera aphidicola subsp. Acyrthosiphon pisum (strain APS) (Acyrthosiphon pisum symbiotic bacterium) protein is Flagellar P-ring protein (flgI).